Consider the following 192-residue polypeptide: Phosphomevalonate kinase (192 aa).

ATP-binding positions include 17–23 (KRKSGKD) and arginine 141. Asparagine 170 serves as a coordination point for substrate. ATP-binding residues include histidine 171 and glutamine 180.

In terms of assembly, monomer.

The protein resides in the cytoplasm. Its subcellular location is the cytosol. It carries out the reaction (R)-5-phosphomevalonate + ATP = (R)-5-diphosphomevalonate + ADP. The protein operates within isoprenoid biosynthesis; isopentenyl diphosphate biosynthesis via mevalonate pathway; isopentenyl diphosphate from (R)-mevalonate: step 2/3. Functionally, catalyzes the reversible ATP-dependent phosphorylation of mevalonate 5-phosphate to produce mevalonate diphosphate and ADP, a key step in the mevalonic acid mediated biosynthesis of isopentenyl diphosphate and other polyisoprenoid metabolites. This is Phosphomevalonate kinase (Pmvk) from Mus musculus (Mouse).